Consider the following 1312-residue polypeptide: DNA repair protein RAD50 (1312 aa).

Arg-13, Asn-36, Gly-37, Gly-39, Lys-40, Thr-41, Thr-42, Ile-65, Asp-67, and Gln-158 together coordinate ATP. Thr-41 serves as a coordination point for Mg(2+). Position 158 (Gln-158) interacts with Mg(2+). 2 coiled-coil regions span residues 185–347 and 403–558; these read TKAL…LIRR and QDLT…LQND. Ser-469 is modified (phosphoserine). At Thr-568 the chain carries Phosphothreonine. Residues 640–678 adopt a coiled-coil conformation; the sequence is DCTIDEYNDVLEETELSYKTALENLKMHQTTLEFNRKAL. One can recognise a Zinc-hook domain in the interval 640–741; the sequence is DCTIDEYNDV…SLRLLEKHII (102 aa). Residues Cys-687 and Cys-690 each coordinate Zn(2+). Coiled coils occupy residues 712–741 and 787–1108; these read DANF…KHII and LAES…DIEK.

The protein belongs to the SMC family. RAD50 subfamily. As to quaternary structure, component of the MRN complex composed of two heterodimers RAD50 and MRE11 associated with a single XRS2. The MRN complexes dimerize on DNA to form joined MRN-MRN oligomers required for DNA double-strand break repair. Requires Zn(2+) as cofactor.

It is found in the nucleus. Its subcellular location is the chromosome. The catalysed reaction is ATP + H2O = ADP + phosphate + H(+). Its function is as follows. Component of the MRN complex, which plays a central role in double-strand break (DSB) repair, DNA recombination, maintenance of telomere integrity and meiosis. The MRN complex is involved in the repair of DNA double-strand breaks (DSBs) via homologous recombination (HR), an error-free mechanism which primarily occurs during S and G2 phases. The complex (1) mediates the end resection of damaged DNA, which generates proper single-stranded DNA, a key initial steps in HR, and is (2) required for the recruitment of other repair factors and efficient activation of TEL1/ATM and ATR upon DNA damage. The MRN complex possesses single-strand endonuclease activity and double-strand-specific 3'-5' exonuclease activity, which are provided by MRE11, to initiate end resection, which is required for single-strand invasion and recombination. Within the complex, RAD50 is both required to bind DNA ends and hold them in close proximity and regulate the activity of MRE11. RAD50 provides an ATP-dependent control of MRE11 by positioning DNA ends into the MRE11 active site: ATP-binding induces a large structural change from an open form with accessible MRE11 nuclease sites into a closed form. The MRN complex is also required for the processing of R-loops. The chain is DNA repair protein RAD50 from Saccharomyces cerevisiae (strain ATCC 204508 / S288c) (Baker's yeast).